Reading from the N-terminus, the 303-residue chain is Taste receptor type 2 member 13 (303 aa).

The Extracellular segment spans residues 1–7; sequence MESALPS. A helical membrane pass occupies residues 8–28; sequence ILTLVIIAEFIIGNLSNGFIV. Over 29–55 the chain is Cytoplasmic; the sequence is LINYIDWVSKRELSSVDKLLIILAISR. The chain crosses the membrane as a helical span at residues 56 to 76; that stretch reads IGLIWEILVSWFLALHYLAIF. Topologically, residues 77-85 are extracellular; sequence VSGTGLRIM. A helical transmembrane segment spans residues 86 to 106; it reads IFSWIVSNHFSLWLATILSIF. Residues 107–128 lie on the Cytoplasmic side of the membrane; it reads YLLKIASFSSPAFLYLKWRVNK. Residues 129–149 traverse the membrane as a helical segment; it reads VILMILLGSLVFLFLNLIQIN. Topologically, residues 150-184 are extracellular; it reads IHIKDWLDRYEGNTTWNFSMSDFVTFSVSVKFTMT. Asn-162 and Asn-166 each carry an N-linked (GlcNAc...) asparagine glycan. A helical membrane pass occupies residues 185–205; the sequence is MFSLTPFTVALISFSLLIFSL. Residues 206–232 are Cytoplasmic-facing; that stretch reads QKHLQKMQLNYKGHREPRTKVHTNALK. A helical membrane pass occupies residues 233-253; that stretch reads IVISFLLLYASFFLCILISWI. Over 254-261 the chain is Extracellular; it reads SELYQNTA. Residues 262–282 form a helical membrane-spanning segment; sequence IYMLCETIGLFYPSSHSFLLI. Residues 283–303 are Cytoplasmic-facing; it reads LGNPKLRQAFLLVAAKVWAKR.

This sequence belongs to the G-protein coupled receptor T2R family.

Its subcellular location is the membrane. Receptor that may play a role in the perception of bitterness and is gustducin-linked. May play a role in sensing the chemical composition of the gastrointestinal content. The activity of this receptor may stimulate alpha gustducin, mediate PLC-beta-2 activation and lead to the gating of TRPM5. The chain is Taste receptor type 2 member 13 (TAS2R13) from Pongo pygmaeus (Bornean orangutan).